Here is a 2288-residue protein sequence, read N- to C-terminus: Protein Ycf2 (2288 aa).

1629–1636 is an ATP binding site; the sequence is GSIGTGRS.

Belongs to the Ycf2 family.

Its subcellular location is the plastid. The protein resides in the chloroplast stroma. Functionally, probable ATPase of unknown function. Its presence in a non-photosynthetic plant (Epifagus virginiana) and experiments in tobacco indicate that it has an essential function which is probably not related to photosynthesis. This is Protein Ycf2 from Phaseolus vulgaris (Kidney bean).